The following is a 999-amino-acid chain: MFFFRFLTTVLLLFNAKLLVAQSSNTSSPVHWDKYSLSINGERLFVFAGEFHYIRLPVPELWLDVFQKLKANGFNAISVYFYWNHHSASEGVYDFETGGHNVQRLFDYAKQAGVYIIARPGPYANGELSAGGYALWAANGRLGGERTRDSQYYDLWSPWMTKIGKIIAANQITEGGPVILVQHENELQETTHRANNTLVLYMEQITQILDAAGIVVPSTHNEKGMRSMSWSMDYEDVGGAVNIYGLDSYPGGLSCTNPNAGFNLIRTYYQWFQNYSYTQPEYLAEFQGGYFTPWGGVFYDDCASMLQPEYADVFYKNNIGNRVTLQSLYMAYGGTNWGHIAAPVVYTSYDYSAPLRETREIRDKLKQTKLLGLFTRVSPDLLQTEMEGNGTSYTTGANIFTWALRNPETNAGFYVVAQDDSSSTTDVVFDLEVETSAGSVNITNIGLDGRQSKIITTDYKVGDTTLLYCSADILTYATLDVDVLALYLNKGQTGTFVLANAASHLKYTVYGNSTVTSSNSSQGTIYTYTQGQGISAIKFSNRFLVYLLDKYTAWDFFAPPLQLSDPNVKPNEHIFVIGPYLVREATIKGRTLELTGDNQNTTSIEIYHGNPFITSITWNGKHLSTKRTAYGSLTATIPGAEAITITLPKLTSWKSHDMIPEIDPEYDDSNWVVCNKTTSFNAIAPLSLPVLYSGDYGYHAGPKIYRGRFGSTNATGVTVTAQNGNAAGWSAWLNGIYIGGVTGDPSIEATSAVLKFNSSTTLKQEGSENVLTVLVDYTGHDEDNVKPARAQNPRGLLGVIFEGSTSTNFTSWKLQGNAGGEKNIDALRGPMNEGGFYGERLGWHLPGFEPSTKSGWDTRAPSDGVDGGSHRFYITEFTLDLGPNSHALDVPIGIHLNASSTSGPAVAYVWLNGYKFAHYLPHIGPQTVFPFQPGVLNIQGSEGHKRKNTLAVSLWALTDQPAALDVVELVAYGKYTSSFDFARDWSYLQPRWVDRSKYA.

The signal sequence occupies residues 1 to 21; that stretch reads MFFFRFLTTVLLLFNAKLLVA. An N-linked (GlcNAc...) asparagine glycan is attached at asparagine 25. Substrate is bound by residues tyrosine 80, asparagine 125, glutamate 127, and asparagine 185. Glutamate 186 acts as the Proton donor in catalysis. Asparagine 195 carries an N-linked (GlcNAc...) asparagine glycan. Residue tyrosine 249 coordinates substrate. The cysteines at positions 255 and 302 are disulfide-linked. Asparagine 274 carries N-linked (GlcNAc...) asparagine glycosylation. Glutamate 285 acts as the Nucleophile in catalysis. Tyrosine 351 contacts substrate. 10 N-linked (GlcNAc...) asparagine glycosylation sites follow: asparagine 389, asparagine 441, asparagine 512, asparagine 519, asparagine 600, asparagine 675, asparagine 713, asparagine 757, asparagine 808, and asparagine 897.

This sequence belongs to the glycosyl hydrolase 35 family.

It is found in the secreted. It carries out the reaction Hydrolysis of terminal non-reducing beta-D-galactose residues in beta-D-galactosides.. Its function is as follows. Cleaves beta-linked terminal galactosyl residues from gangliosides, glycoproteins, and glycosaminoglycans. The protein is Probable beta-galactosidase C (lacC) of Talaromyces marneffei (strain ATCC 18224 / CBS 334.59 / QM 7333) (Penicillium marneffei).